The chain runs to 156 residues: Small ribosomal subunit protein uS7 (156 aa).

The protein belongs to the universal ribosomal protein uS7 family. As to quaternary structure, part of the 30S ribosomal subunit. Contacts proteins S9 and S11.

One of the primary rRNA binding proteins, it binds directly to 16S rRNA where it nucleates assembly of the head domain of the 30S subunit. Is located at the subunit interface close to the decoding center, probably blocks exit of the E-site tRNA. This is Small ribosomal subunit protein uS7 from Thermosynechococcus vestitus (strain NIES-2133 / IAM M-273 / BP-1).